The following is a 134-amino-acid chain: Iron-sulfur cluster insertion protein ErpA (134 aa).

C47, C126, and C128 together coordinate iron-sulfur cluster.

It belongs to the HesB/IscA family. In terms of assembly, homodimer. Iron-sulfur cluster serves as cofactor.

Its function is as follows. Required for insertion of 4Fe-4S clusters for at least IspG. The polypeptide is Iron-sulfur cluster insertion protein ErpA (Coxiella burnetii (strain RSA 331 / Henzerling II)).